We begin with the raw amino-acid sequence, 101 residues long: Small ribosomal subunit protein uS14 (101 aa).

This sequence belongs to the universal ribosomal protein uS14 family. In terms of assembly, part of the 30S ribosomal subunit. Contacts proteins S3 and S10.

Binds 16S rRNA, required for the assembly of 30S particles and may also be responsible for determining the conformation of the 16S rRNA at the A site. This Chlamydia muridarum (strain MoPn / Nigg) protein is Small ribosomal subunit protein uS14.